The following is a 503-amino-acid chain: Probable protein kinase UbiB (503 aa).

A helical transmembrane segment spans residues 13-35 (TFYRYRLAGLCASLMGSGWICAL). The Protein kinase domain maps to 120–491 (EFETEPIASA…QQRQSLWLAV (372 aa)). ATP is bound by residues 126–134 (IASASIAQV) and K148. D283 (proton acceptor) is an active-site residue. The helical transmembrane segment at 485-502 (QSLWLAVIAVVLLLILLL) threads the bilayer.

The protein belongs to the ABC1 family. UbiB subfamily.

It localises to the cell inner membrane. It functions in the pathway cofactor biosynthesis; ubiquinone biosynthesis [regulation]. Is probably a protein kinase regulator of UbiI activity which is involved in aerobic coenzyme Q (ubiquinone) biosynthesis. This is Probable protein kinase UbiB from Neisseria meningitidis serogroup B (strain ATCC BAA-335 / MC58).